The chain runs to 98 residues: NADH-ubiquinone oxidoreductase chain 4L (98 aa).

Transmembrane regions (helical) follow at residues 1–21 (MMSI…GVLI), 28–48 (STLL…ALLI), and 59–79 (APLI…ALLV).

This sequence belongs to the complex I subunit 4L family. As to quaternary structure, core subunit of respiratory chain NADH dehydrogenase (Complex I) which is composed of 45 different subunits.

It localises to the mitochondrion inner membrane. It catalyses the reaction a ubiquinone + NADH + 5 H(+)(in) = a ubiquinol + NAD(+) + 4 H(+)(out). In terms of biological role, core subunit of the mitochondrial membrane respiratory chain NADH dehydrogenase (Complex I) which catalyzes electron transfer from NADH through the respiratory chain, using ubiquinone as an electron acceptor. Part of the enzyme membrane arm which is embedded in the lipid bilayer and involved in proton translocation. This Osphranter robustus (Wallaroo) protein is NADH-ubiquinone oxidoreductase chain 4L (MT-ND4L).